Reading from the N-terminus, the 90-residue chain is Small ribosomal subunit protein bS18 (90 aa).

Residues 1–23 form a disordered region; the sequence is MKPMRQKNTRAQGNKSISNALAS. Over residues 9–21 the composition is skewed to polar residues; that stretch reads TRAQGNKSISNAL.

The protein belongs to the bacterial ribosomal protein bS18 family. As to quaternary structure, part of the 30S ribosomal subunit. Forms a tight heterodimer with protein bS6.

Its function is as follows. Binds as a heterodimer with protein bS6 to the central domain of the 16S rRNA, where it helps stabilize the platform of the 30S subunit. The chain is Small ribosomal subunit protein bS18 from Chlorobium luteolum (strain DSM 273 / BCRC 81028 / 2530) (Pelodictyon luteolum).